The following is a 620-amino-acid chain: MDSHTLVQALIYLGSAALIVPIAVRLGLGSVLGYLIAGCIIGPWGLRLVTDAESILHFAEIGVVLMLFIIGLELDPQRLWKLRAAVFGGGALQMVICGGLLGLFCMLLGLRWQVAELIGMTLALSSTAIAMQAMNERNLMVTQMGRSAFAVLLFQDIAAIPLVAMIPLLAASSASTTMGAFALSALKVAGALVLVVLLGRYVTRPALRFVARSGLREVFSAVALFLVFGFGLLLEEVGLSMAMGAFLAGVLLASSEYRHALESDIEPFKGLLLGLFFIGVGMSIDFGTLIENPLRIVILLLGFLIIKIAMLWLIARPLQVPNKQRRWFAVLLGQGSEFAFVVFGAAQMANVLEPEWAKSLTLAVALSMAATPILLVILNRLEQSSTEEAREADEIDEEQPRVIIAGFGRFGQITGRLLLSSGVKMVVLDHDPDHIETLRKFGMKVFYGDATRMDLLESAGAAKAEVLINAIDDPQTNLQLTEMVKEHFPHLQIIARARDVDHYIRLRQAGVEKPERETFEGALKTGRLALESLGLGPYEARERADVFRRFNIQMVEEMAMVENDTKARAAVYKRTSAMLSEIITEDREHLSLIQRHGWQGTEEGKHTGNMADEPETKPSS.

Residues M1 to S3 lie on the Periplasmic side of the membrane. A helical transmembrane segment spans residues H4–V24. Position 25 (R25) is a topological domain, cytoplasmic. Residues L26–L46 traverse the membrane as a helical segment. Over R47–E53 the chain is Periplasmic. The chain crosses the membrane as a helical span at residues S54–L74. The Cytoplasmic portion of the chain corresponds to D75–G89. The helical transmembrane segment at G90–L110 threads the bilayer. At R111 to Q113 the chain is on the periplasmic side. The chain crosses the membrane as a helical span at residues V114–M134. Residues N135–A148 lie on the Cytoplasmic side of the membrane. The helical transmembrane segment at F149–L169 threads the bilayer. Over A170–T177 the chain is Periplasmic. The chain crosses the membrane as a helical span at residues M178–L198. Residues G199 to S213 are Cytoplasmic-facing. Residues G214 to L233 form a helical membrane-spanning segment. Residues L234–E236 are Periplasmic-facing. The chain crosses the membrane as a helical span at residues V237–S254. At S255 to K269 the chain is on the cytoplasmic side. A helical membrane pass occupies residues G270 to I290. Residues E291–P293 are Periplasmic-facing. The helical transmembrane segment at L294–I314 threads the bilayer. Topologically, residues A315–R326 are cytoplasmic. A helical transmembrane segment spans residues W327–Q347. Topologically, residues M348–K358 are periplasmic. The helical transmembrane segment at S359–N379 threads the bilayer. Over R380–S620 the chain is Cytoplasmic. Residues Q399–T518 form the RCK N-terminal domain. The interval G597–S620 is disordered.

This sequence belongs to the monovalent cation:proton antiporter 2 (CPA2) transporter (TC 2.A.37) family. KefC subfamily. As to quaternary structure, homodimer. Interacts with the regulatory subunit KefF.

The protein localises to the cell inner membrane. Pore-forming subunit of a potassium efflux system that confers protection against electrophiles. Catalyzes K(+)/H(+) antiport. The sequence is that of Glutathione-regulated potassium-efflux system protein KefC from Shigella flexneri.